A 489-amino-acid chain; its full sequence is Beta-glucosidase 14 (489 aa).

An N-terminal signal peptide occupies residues 1 to 21; sequence MTSKYFSVLVFIILASNEVVA. Position 49 (glutamine 49) interacts with a beta-D-glucoside. An N-linked (GlcNAc...) asparagine glycan is attached at asparagine 80. A beta-D-glucoside is bound by residues histidine 153 and 198–199; that span reads NE. Glutamate 199 (proton donor) is an active-site residue. An intrachain disulfide couples cysteine 218 to cysteine 226. Asparagine 225 is a glycosylation site (N-linked (GlcNAc...) asparagine). Tyrosine 343 contacts a beta-D-glucoside. N-linked (GlcNAc...) asparagine glycosylation is present at asparagine 357. A beta-D-glucoside is bound by residues glutamate 396, tryptophan 441, 448 to 449, and phenylalanine 457; that span reads EW. Glutamate 396 serves as the catalytic Nucleophile.

This sequence belongs to the glycosyl hydrolase 1 family.

The enzyme catalyses Hydrolysis of terminal, non-reducing beta-D-glucosyl residues with release of beta-D-glucose.. The polypeptide is Beta-glucosidase 14 (Arabidopsis thaliana (Mouse-ear cress)).